A 446-amino-acid polypeptide reads, in one-letter code: ATP-dependent protease ATPase subunit HslU (446 aa).

ATP contacts are provided by residues Ile18, Gly60–Glu65, Asp259, Glu324, and Arg396.

It belongs to the ClpX chaperone family. HslU subfamily. A double ring-shaped homohexamer of HslV is capped on each side by a ring-shaped HslU homohexamer. The assembly of the HslU/HslV complex is dependent on binding of ATP.

It localises to the cytoplasm. In terms of biological role, ATPase subunit of a proteasome-like degradation complex; this subunit has chaperone activity. The binding of ATP and its subsequent hydrolysis by HslU are essential for unfolding of protein substrates subsequently hydrolyzed by HslV. HslU recognizes the N-terminal part of its protein substrates and unfolds these before they are guided to HslV for hydrolysis. This Baumannia cicadellinicola subsp. Homalodisca coagulata protein is ATP-dependent protease ATPase subunit HslU.